A 555-amino-acid polypeptide reads, in one-letter code: Urocanate hydratase (555 aa).

NAD(+)-binding positions include 52 to 53, glutamine 130, 176 to 178, glutamate 196, arginine 201, 242 to 243, 263 to 267, 273 to 274, and tyrosine 322; these read GG, GMG, NA, QTSAH, and YL. Residue cysteine 410 is part of the active site. Glycine 492 is a binding site for NAD(+).

It belongs to the urocanase family. NAD(+) is required as a cofactor.

The protein resides in the cytoplasm. The enzyme catalyses 4-imidazolone-5-propanoate = trans-urocanate + H2O. It functions in the pathway amino-acid degradation; L-histidine degradation into L-glutamate; N-formimidoyl-L-glutamate from L-histidine: step 2/3. Functionally, catalyzes the conversion of urocanate to 4-imidazolone-5-propionate. This is Urocanate hydratase from Shewanella baltica (strain OS195).